The following is a 175-amino-acid chain: MGNEERELPNIIICGTPGTGKTTLAEQVAETTELENICIGDVVKENHLHFGFDEKWKTYDVDEDKVLDYLEPKLLKGGCIIDWHTCGLFSEELIDLVVVLRTDHSKLWERLESRGYSLEKIQENNEAEIMQICLEEARESFDPKIVVELPSESIEEMESNLSRITQWVTNWKKNH.

ATP-binding residues include Gly18, Gly20, Lys21, Thr22, and Thr23. The tract at residues 38 to 61 (CIGDVVKENHLHFGFDEKWKTYDV) is NMPbind. Residues 113 to 123 (SRGYSLEKIQE) form an LID region. Position 114 (Arg114) interacts with ATP.

This sequence belongs to the adenylate kinase family. AK6 subfamily. In terms of assembly, interacts with small ribosomal subunit protein uS11. Not a structural component of 43S pre-ribosomes, but transiently interacts with them by binding to uS11.

The protein localises to the cytoplasm. It localises to the nucleus. The enzyme catalyses AMP + ATP = 2 ADP. It carries out the reaction ATP + H2O = ADP + phosphate + H(+). Its function is as follows. Broad-specificity nucleoside monophosphate (NMP) kinase that catalyzes the reversible transfer of the terminal phosphate group between nucleoside triphosphates and monophosphates. Also has ATPase activity. Involved in the late cytoplasmic maturation steps of the 40S ribosomal particles, specifically 18S rRNA maturation. While NMP activity is not required for ribosome maturation, ATPase activity is. Associates transiently with small ribosomal subunit protein uS11. ATP hydrolysis breaks the interaction with uS11. May temporarily remove uS11 from the ribosome to enable a conformational change of the ribosomal RNA that is needed for the final maturation step of the small ribosomal subunit. Its NMP activity may have a role in nuclear energy homeostasis. The protein is Adenylate kinase isoenzyme 6 homolog (fap7) of Schizosaccharomyces pombe (strain 972 / ATCC 24843) (Fission yeast).